A 193-amino-acid chain; its full sequence is MSDDDSRASTSSSSSSSSNQQTEKEGSTPKKKESKVSMSKNSKLLSTSAKRIQKELADITLDPPPNCSAGPKGDNIYEWRSTILGPPGSVYEGGVFFLDITFTPEYPFKPPKVTFRTRIYHCNINSQGVICLDILKDNWSPALTISKVLLSICSLLTDCNPADPLVGSIATQYMTNRAEHDRMARQWTKRYAT.

The disordered stretch occupies residues 1–45 (MSDDDSRASTSSSSSSSSNQQTEKEGSTPKKKESKVSMSKNSKLL). At S2 the chain carries N-acetylserine. Over residues 8 to 18 (ASTSSSSSSSS) the composition is skewed to low complexity. A compositionally biased stretch (basic and acidic residues) spans 22-35 (TEKEGSTPKKKESK). Residues 36 to 45 (VSMSKNSKLL) are compositionally biased toward polar residues. In terms of domain architecture, UBC core spans 47–193 (TSAKRIQKEL…ARQWTKRYAT (147 aa)). The active-site Glycyl thioester intermediate is the C131. A Glycyl lysine isopeptide (Lys-Gly) (interchain with G-Cter in ISG15) cross-link involves residue K136.

The protein belongs to the ubiquitin-conjugating enzyme family. As to quaternary structure, interacts with RNF14. In terms of processing, ISGylation suppresses ubiquitin E2 enzyme activity. Post-translationally, autoubiquitinated.

Its subcellular location is the nucleus. It carries out the reaction S-ubiquitinyl-[E1 ubiquitin-activating enzyme]-L-cysteine + [E2 ubiquitin-conjugating enzyme]-L-cysteine = [E1 ubiquitin-activating enzyme]-L-cysteine + S-ubiquitinyl-[E2 ubiquitin-conjugating enzyme]-L-cysteine.. The catalysed reaction is S-ubiquitinyl-[E1 ubiquitin-activating enzyme]-L-cysteine + [acceptor protein]-L-lysine = [E1 ubiquitin-activating enzyme]-L-cysteine + N(6)-monoubiquitinyl-[acceptor protein]-L-lysine.. It participates in protein modification; protein ubiquitination. Its function is as follows. Accepts ubiquitin from the E1 complex and catalyzes its covalent attachment to other proteins. Catalyzes the covalent attachment of ISG15 to other proteins. Mediates the selective degradation of short-lived and abnormal proteins. In vitro also catalyzes 'Lys-48'-linked polyubiquitination. The sequence is that of Ubiquitin-conjugating enzyme E2 E1 (Ube2e1) from Mus musculus (Mouse).